The chain runs to 303 residues: Porphobilinogen deaminase (303 aa).

C241 is subject to S-(dipyrrolylmethanemethyl)cysteine.

Belongs to the HMBS family. Monomer. Requires dipyrromethane as cofactor.

It catalyses the reaction 4 porphobilinogen + H2O = hydroxymethylbilane + 4 NH4(+). Its pathway is porphyrin-containing compound metabolism; protoporphyrin-IX biosynthesis; coproporphyrinogen-III from 5-aminolevulinate: step 2/4. It participates in porphyrin-containing compound metabolism; chlorophyll biosynthesis. In terms of biological role, tetrapolymerization of the monopyrrole PBG into the hydroxymethylbilane pre-uroporphyrinogen in several discrete steps. The sequence is that of Porphobilinogen deaminase from Roseiflexus castenholzii (strain DSM 13941 / HLO8).